Reading from the N-terminus, the 446-residue chain is Baeyer-Villiger oxidase mdpL (446 aa).

It belongs to the AflY oxidoreductase family. It depends on NADPH as a cofactor.

It functions in the pathway secondary metabolite biosynthesis. Its function is as follows. Baeyer-Villiger oxidase; part of the gene cluster that mediates the biosynthesis of monodictyphenone, a prenyl xanthone derivative. The pathway begins with the synthesis of atrochrysone thioester by the polyketide synthase (PKS) mdpG. The atrochrysone carboxyl ACP thioesterase mdpF then breaks the thioester bond and releases the atrochrysone carboxylic acid from mdpG. The atrochrysone carboxylic acid is then converted to atrochrysone which is further transformed into emodin anthrone. The next step is performed by the anthrone oxygenase mdpH that catalyzes the oxidation of emodinanthrone to emodin. Emodin is further modified to yield monodictyphenone via several steps involving mdpB, mdpC mdpJ, mdpK and mdpL. These enzymes with xptA, xptB and xptC are also proposed to be involved in the synthesis of shamixanthone from emodin. Especially, direct reduction of emodin by the short chain dehydrogenase mdpC followed by dehydration catalyzed by the scytalone dehydratase-like protein mdpB gives loss of oxygen and formation of chrysophanol intermediate in two simple steps. The sequence is that of Baeyer-Villiger oxidase mdpL from Emericella nidulans (strain FGSC A4 / ATCC 38163 / CBS 112.46 / NRRL 194 / M139) (Aspergillus nidulans).